The chain runs to 303 residues: UPF0282 protein MM_2966 (303 aa).

This sequence belongs to the UPF0282 family.

The chain is UPF0282 protein MM_2966 from Methanosarcina mazei (strain ATCC BAA-159 / DSM 3647 / Goe1 / Go1 / JCM 11833 / OCM 88) (Methanosarcina frisia).